The primary structure comprises 408 residues: Arginine biosynthesis bifunctional protein ArgJ (408 aa).

Substrate-binding residues include threonine 158, lysine 184, threonine 195, glutamate 281, asparagine 403, and threonine 408. The active-site Nucleophile is the threonine 195.

Belongs to the ArgJ family. In terms of assembly, heterotetramer of two alpha and two beta chains.

The protein localises to the cytoplasm. The enzyme catalyses N(2)-acetyl-L-ornithine + L-glutamate = N-acetyl-L-glutamate + L-ornithine. The catalysed reaction is L-glutamate + acetyl-CoA = N-acetyl-L-glutamate + CoA + H(+). It participates in amino-acid biosynthesis; L-arginine biosynthesis; L-ornithine and N-acetyl-L-glutamate from L-glutamate and N(2)-acetyl-L-ornithine (cyclic): step 1/1. Its pathway is amino-acid biosynthesis; L-arginine biosynthesis; N(2)-acetyl-L-ornithine from L-glutamate: step 1/4. Its function is as follows. Catalyzes two activities which are involved in the cyclic version of arginine biosynthesis: the synthesis of N-acetylglutamate from glutamate and acetyl-CoA as the acetyl donor, and of ornithine by transacetylation between N(2)-acetylornithine and glutamate. In Bacillus thuringiensis subsp. konkukian (strain 97-27), this protein is Arginine biosynthesis bifunctional protein ArgJ.